The sequence spans 829 residues: MKYDHQSIETRWQKKWEDSGIFQCDTEADKPKYYVLEMFPYPSGNIHMGHVRNYSIGDVVARFKRMQGFNVLHPMGWDAFGLPAENAAIKNGTHPAKWTFANIDNMRSQLKRLGYSYDWQREVATCTPEYYRWEQLFFLRFLEKGLVYRKKAAQNWCPKCHTVLANEQVIEGLCWRCDSAVEQKELTQWFLRITDYAEELLADLSKLENGWPERVLSMQRNWIGKSTGAEIRFALDGRDDSITVFTTRPDTIFGATFMSIAPEHPLVEELIDGKPQADDVRAFVERIRNMDRIDRQSDTLEKEGVFTGAYCVNPFTGRKMPIWVANFVLAEYGTGAVMAVPAHDQRDFEFARKYDLPMQVVIQPQGETLDPATMSAAWTEAGALVNSGNFDGLANEDAKQRIADDLETTGNGRRTINYRLRDWNISRQRYWGAPIPVIYCDACGVVPEKEENLPVVLPLDVKTHDDGRSPLPHTPAFYECTCPVCGGKARRETDTMDTFVESSWYFARYTDATNDKAPFTPDALRYWLPVDQYIGGVEHAILHLLYSRFFTKALRDCGFIELDEPFANLLTQGMVLMDGSKMSKSKGNVVDPTEMIARYGADTVRLFCLFAAPPERDFDWSESGIEGSYRFVGRVWRLVEELREHLLAVGACSSTAEDAKTPVARELRLKEHATVRKAGDDLNDRFQFNTAIAAVMELVNALYLAKDELVADESGRKVLSSAVSTVLTLLSPFTPHLSEELWALLGHTESVSTLPWPRWKEDALVRDTVTLVVQVNGKLRGKLDIPADASREEVETLALNEPNVLRYLEGVTVRKVVVIPGKLVNVVVS.

Positions 40–50 match the 'HIGH' region motif; it reads PYPSGNIHMGH. Positions 581-585 match the 'KMSKS' region motif; that stretch reads KMSKS. Lys584 lines the ATP pocket.

It belongs to the class-I aminoacyl-tRNA synthetase family.

The protein resides in the cytoplasm. The enzyme catalyses tRNA(Leu) + L-leucine + ATP = L-leucyl-tRNA(Leu) + AMP + diphosphate. The chain is Leucine--tRNA ligase from Nitratidesulfovibrio vulgaris (strain DP4) (Desulfovibrio vulgaris).